A 270-amino-acid chain; its full sequence is Formamidopyrimidine-DNA glycosylase (270 aa).

Proline 2 (schiff-base intermediate with DNA) is an active-site residue. Glutamate 3 (proton donor) is an active-site residue. The active-site Proton donor; for beta-elimination activity is the lysine 58. 3 residues coordinate DNA: histidine 91, arginine 110, and arginine 151. An FPG-type zinc finger spans residues 236 to 270; it reads FVYGRGGEFCKVCGSTLREIRLGQRASVYCPRCQR. The Proton donor; for delta-elimination activity role is filled by arginine 260.

It belongs to the FPG family. As to quaternary structure, monomer. Requires Zn(2+) as cofactor.

The catalysed reaction is Hydrolysis of DNA containing ring-opened 7-methylguanine residues, releasing 2,6-diamino-4-hydroxy-5-(N-methyl)formamidopyrimidine.. It catalyses the reaction 2'-deoxyribonucleotide-(2'-deoxyribose 5'-phosphate)-2'-deoxyribonucleotide-DNA = a 3'-end 2'-deoxyribonucleotide-(2,3-dehydro-2,3-deoxyribose 5'-phosphate)-DNA + a 5'-end 5'-phospho-2'-deoxyribonucleoside-DNA + H(+). Its function is as follows. Involved in base excision repair of DNA damaged by oxidation or by mutagenic agents. Acts as a DNA glycosylase that recognizes and removes damaged bases. Has a preference for oxidized purines, such as 7,8-dihydro-8-oxoguanine (8-oxoG). Has AP (apurinic/apyrimidinic) lyase activity and introduces nicks in the DNA strand. Cleaves the DNA backbone by beta-delta elimination to generate a single-strand break at the site of the removed base with both 3'- and 5'-phosphates. This is Formamidopyrimidine-DNA glycosylase from Pseudomonas aeruginosa (strain LESB58).